The primary structure comprises 210 residues: Pyrrolidone-carboxylate peptidase (210 aa).

Residues Glu80, Cys143, and His162 contribute to the active site.

The protein belongs to the peptidase C15 family. In terms of assembly, homotetramer.

It localises to the cytoplasm. It catalyses the reaction Release of an N-terminal pyroglutamyl group from a polypeptide, the second amino acid generally not being Pro.. Removes 5-oxoproline from various penultimate amino acid residues except L-proline. The protein is Pyrrolidone-carboxylate peptidase of Chromobacterium violaceum (strain ATCC 12472 / DSM 30191 / JCM 1249 / CCUG 213 / NBRC 12614 / NCIMB 9131 / NCTC 9757 / MK).